The sequence spans 2664 residues: Non-reducing polyketide synthase sorB (2664 aa).

Residues 21–45 (KSAPQSGNTADDIPNAASQPDTTST) are disordered. Residues 36–45 (AASQPDTTST) show a composition bias toward polar residues. Residues 112–281 (ADHARRLAEW…TTPSRIASDL (170 aa)) form an N-terminal acylcarrier protein transacylase domain (SAT) region. C184 functions as the Nucleophile; for transacylase activity in the catalytic mechanism. H302 serves as the catalytic Proton donor/acceptor; for transacylase activity. The Ketosynthase family 3 (KS3) domain occupies 428 to 849 (DNDIAVIGMS…GSNASMVIKQ (422 aa)). Residues C596, H731, and H772 each act as for beta-ketoacyl synthase activity in the active site. The segment at 961 to 1276 (CFGGQVSKSV…TQGTRQLADV (316 aa)) is malonyl-CoA:ACP transacylase (MAT) domain. An N-terminal hotdog fold region spans residues 1345 to 1477 (PGLYTFMGYG…GQLEFHRADD (133 aa)). The PKS/mFAS DH domain occupies 1345–1663 (PGLYTFMGYG…FSARSMSELF (319 aa)). The product template (PT) domain stretch occupies residues 1376–1548 (VSGYTLGKTV…PSESAGRAVK (173 aa)). A C-terminal hotdog fold region spans residues 1507–1663 (DEVIQGQSIY…FSARSMSELF (157 aa)). The Carrier domain occupies 1711–1785 (TELWAKLLPV…GILAFLQSTL (75 aa)). An O-(pantetheine 4'-phosphoryl)serine modification is found at S1745. Residues 1789 to 1820 (GEDDASQSSDAASSSRNTPPSSNDGILATPSP) are disordered. A compositionally biased stretch (low complexity) spans 1794–1803 (SQSSDAASSS). Residues 2015 to 2197 (FQLMADFLSR…DAGYKHVEWT (183 aa)) are methyltransferase domain. The interval 2281 to 2526 (VTGTTGSLGS…TLRSFPAVEG (246 aa)) is NADPH-binding (R) domain.

Pantetheine 4'-phosphate serves as cofactor.

It functions in the pathway secondary metabolite biosynthesis. Functionally, non-reducing polyketide synthase; part of the gene cluster that mediates the biosynthesis of sorbicillinoids, a diverse group of yellow secondary metabolites that restrict growth of competing pathogenic fungi but not of bacteria. Sorbicillinoids biosynthesis requires the action of two PKSs. SorA iteratively combines three acetyl units and the growing chain is modified by the ketoacyl reductase subunit, and optional by the enoyl reductase subunit in the second cycle. The polyketide is then handed over to the PKS SorB, which adds three more acetyl units, and two methyl groups. SorB releases an aldehyde, which undergoes spontaneous cyclization resulting in the formation of sorbicillin or 2',3'-dihydrosorbicillin. The monooxygenase sorC oxidizes sorbicillin and 2',3'-dihydrosorbicillin to 2',3'-dihydrosorbicillinol and sorbicillinol, respectively. The oxidoreductase sorD further converts sorbicillinol into oxosorbicillinol. Sorbicillinol is the building block for the other sorbicillinoids such as disorbicillinol, bisvertinolon, and dihydrobisvertinolone. In Penicillium rubens (strain ATCC 28089 / DSM 1075 / NRRL 1951 / Wisconsin 54-1255) (Penicillium chrysogenum), this protein is Non-reducing polyketide synthase sorB.